The chain runs to 98 residues: NADH-ubiquinone oxidoreductase chain 4L (98 aa).

3 consecutive transmembrane segments (helical) span residues 1-21 (MTMV…GLLM), 29-49 (SLLC…VTIL), and 61-81 (IILL…LVMV).

Belongs to the complex I subunit 4L family. Core subunit of respiratory chain NADH dehydrogenase (Complex I) which is composed of 45 different subunits.

The protein resides in the mitochondrion inner membrane. The catalysed reaction is a ubiquinone + NADH + 5 H(+)(in) = a ubiquinol + NAD(+) + 4 H(+)(out). Core subunit of the mitochondrial membrane respiratory chain NADH dehydrogenase (Complex I) which catalyzes electron transfer from NADH through the respiratory chain, using ubiquinone as an electron acceptor. Part of the enzyme membrane arm which is embedded in the lipid bilayer and involved in proton translocation. The polypeptide is NADH-ubiquinone oxidoreductase chain 4L (MT-ND4L) (Mirounga angustirostris (Northern elephant seal)).